A 239-amino-acid polypeptide reads, in one-letter code: Octanoyltransferase (239 aa).

Residues 48–236 (EGGDELVWLV…AFETVFGETT (189 aa)) enclose the BPL/LPL catalytic domain. Substrate contacts are provided by residues 87-94 (RGGEYTYH), 167-169 (ALG), and 180-182 (GLS). Cys198 functions as the Acyl-thioester intermediate in the catalytic mechanism.

This sequence belongs to the LipB family.

The protein localises to the cytoplasm. It catalyses the reaction octanoyl-[ACP] + L-lysyl-[protein] = N(6)-octanoyl-L-lysyl-[protein] + holo-[ACP] + H(+). Its pathway is protein modification; protein lipoylation via endogenous pathway; protein N(6)-(lipoyl)lysine from octanoyl-[acyl-carrier-protein]: step 1/2. Catalyzes the transfer of endogenously produced octanoic acid from octanoyl-acyl-carrier-protein onto the lipoyl domains of lipoate-dependent enzymes. Lipoyl-ACP can also act as a substrate although octanoyl-ACP is likely to be the physiological substrate. The sequence is that of Octanoyltransferase from Rhizobium etli (strain ATCC 51251 / DSM 11541 / JCM 21823 / NBRC 15573 / CFN 42).